The sequence spans 455 residues: P2X purinoceptor 5 (455 aa).

Topologically, residues 1-30 (MGQAAWKGFVLSLFDYKTAKFVVAKSKKVG) are cytoplasmic. A helical transmembrane segment spans residues 31–50 (LLYRVLQLTILLYLLIWVFL). The Extracellular portion of the chain corresponds to 51–339 (IKKSYQDIDT…KFSIIPTVIN (289 aa)). 69–71 (KVK) provides a ligand contact to ATP. Residue asparagine 77 is glycosylated (N-linked (GlcNAc...) asparagine). 3 disulfides stabilise this stretch: cysteine 118–cysteine 169, cysteine 129–cysteine 152, and cysteine 135–cysteine 163. A glycan (N-linked (GlcNAc...) asparagine) is linked at asparagine 157. Residue threonine 189 participates in ATP binding. A glycan (N-linked (GlcNAc...) asparagine) is linked at asparagine 202. Disulfide bonds link cysteine 220-cysteine 229 and cysteine 263-cysteine 272. ATP is bound by residues 294–296 (NFR) and lysine 314. A helical membrane pass occupies residues 340 to 362 (IGSGLALMGAGAFFCDLVLIYLI). The Cytoplasmic portion of the chain corresponds to 363–455 (RKSEFYRDKK…PSQILQTVKT (93 aa)).

It belongs to the P2X receptor family. In terms of assembly, functional P2XRs are organized as homomeric and heteromeric trimers. Homotrimer. Forms heterotrimer with P2RX1. Expressed in a number of tissues, with highest levels detected in heart and kidney.

The protein localises to the cell membrane. It catalyses the reaction Na(+)(in) = Na(+)(out). It carries out the reaction Ca(2+)(in) = Ca(2+)(out). The enzyme catalyses chloride(in) = chloride(out). Activated by ATP. Slowly desensitizing. Not activated by ATP agonist alpha/beta-methylene-ATP. Highly sensitive to the antagonists suramin and PPADS. Its function is as follows. ATP-gated nonselective transmembrane cation channel permeable to potassium, sodium and calcium. Unlike other P2RX receptors, the P2X5 receptor is also permeable to chloride. Acts as an important regulator of inflammatory-related bone loss and osteoclast multinucleation. The polypeptide is P2X purinoceptor 5 (Mus musculus (Mouse)).